Here is a 236-residue protein sequence, read N- to C-terminus: Lipoprotein B (236 aa).

Positions 1–27 (MNKKYFKKYSSILIFSMSILAPMTLAS) are cleaved as a signal peptide. Residue C28 is the site of N-palmitoyl cysteine attachment. The S-diacylglycerol cysteine moiety is linked to residue C28. Disordered stretches follow at residues 35–112 (EKDK…KSNV) and 134–236 (SEKQ…GDAF). A compositionally biased stretch (polar residues) spans 43-60 (STNLSEPNKSNTSKTNTF). Basic and acidic residues predominate over residues 61 to 74 (QDKKDSTNKIDSQE). Polar residues-rich tracts occupy residues 75–112 (SSKT…KSNV) and 143–157 (NASS…NTLK). Over residues 158 to 175 (NQDKTKQENDQFKQESKD) the composition is skewed to basic and acidic residues. Positions 193 to 212 (VISSQSTTRLEMPKNDQSNS) are enriched in polar residues. Residues 215-228 (EDNKKSPESPKWWE) show a composition bias toward basic and acidic residues.

Belongs to the M.pulmonis LipAB lipoprotein family.

The protein localises to the cell membrane. In Mycoplasmopsis pulmonis (strain UAB CTIP) (Mycoplasma pulmonis), this protein is Lipoprotein B (lipB).